The chain runs to 314 residues: Protoheme IX farnesyltransferase (314 aa).

8 helical membrane passes run 31–51, 52–72, 119–139, 152–172, 179–199, 225–245, 247–267, and 284–304; these read VMSL…GHFH, PVLA…SGAL, ILVN…YVVI, IVIG…AVTG, LLLF…LALF, ILLY…LGYF, AVYG…AINV, and FAFS…EVVF.

It belongs to the UbiA prenyltransferase family. Protoheme IX farnesyltransferase subfamily.

The protein localises to the cell inner membrane. The catalysed reaction is heme b + (2E,6E)-farnesyl diphosphate + H2O = Fe(II)-heme o + diphosphate. It participates in porphyrin-containing compound metabolism; heme O biosynthesis; heme O from protoheme: step 1/1. Functionally, converts heme B (protoheme IX) to heme O by substitution of the vinyl group on carbon 2 of heme B porphyrin ring with a hydroxyethyl farnesyl side group. This chain is Protoheme IX farnesyltransferase, found in Bradyrhizobium diazoefficiens (strain JCM 10833 / BCRC 13528 / IAM 13628 / NBRC 14792 / USDA 110).